We begin with the raw amino-acid sequence, 316 residues long: Methionyl-tRNA formyltransferase (316 aa).

A (6S)-5,6,7,8-tetrahydrofolate-binding site is contributed by 109-112; that stretch reads SLLP.

The protein belongs to the Fmt family.

It carries out the reaction L-methionyl-tRNA(fMet) + (6R)-10-formyltetrahydrofolate = N-formyl-L-methionyl-tRNA(fMet) + (6S)-5,6,7,8-tetrahydrofolate + H(+). In terms of biological role, attaches a formyl group to the free amino group of methionyl-tRNA(fMet). The formyl group appears to play a dual role in the initiator identity of N-formylmethionyl-tRNA by promoting its recognition by IF2 and preventing the misappropriation of this tRNA by the elongation apparatus. This Nitrosomonas eutropha (strain DSM 101675 / C91 / Nm57) protein is Methionyl-tRNA formyltransferase.